The primary structure comprises 471 residues: Coagulation factor IX (471 aa).

The first 28 residues, 1-28 (MKHLNTVMAESPALITIFLLGYLLSTEC), serve as a signal peptide directing secretion. A propeptide spanning residues 29–46 (AVFLDRENATKILTRPKR) is cleaved from the precursor. Positions 47, 48, 53, 54, 61, 63, 66, 67, 72, 73, and 76 each coordinate Ca(2+). A Gla domain is found at 47–92 (YNSGKLEEFVRGNLERECIEERCSFEEAREVFENTEKTTEFWKQYV). Residues glutamate 53, glutamate 54, glutamate 61, glutamate 63, glutamate 66, glutamate 67, glutamate 72, glutamate 73, glutamate 76, glutamate 79, and glutamate 82 each carry the 4-carboxyglutamate modification. A Mg(2+)-binding site is contributed by glutamate 61. A disulfide bridge connects residues cysteine 64 and cysteine 69. Glutamate 66 is a binding site for Mg(2+). Residue glutamate 72 coordinates Mg(2+). Glutamate 76 provides a ligand contact to Mg(2+). Glutamate 82 contacts Ca(2+). Glutamate 82 is a binding site for Mg(2+). O-linked (GalNAc...) threonine glycosylation is present at threonine 85. Positions 86, 93, 94, and 96 each coordinate Ca(2+). 4-carboxyglutamate is present on glutamate 86. Residue glutamate 86 participates in Mg(2+) binding. One can recognise an EGF-like 1; calcium-binding domain in the interval 93–129 (DGDQCESNPCLNGGICKDDISSYECWCQVGFEGRNCE). Disulfide bonds link cysteine 97–cysteine 108, cysteine 102–cysteine 117, cysteine 119–cysteine 128, cysteine 134–cysteine 145, cysteine 141–cysteine 155, cysteine 157–cysteine 170, cysteine 178–cysteine 345, cysteine 262–cysteine 278, cysteine 392–cysteine 406, and cysteine 417–cysteine 445. The O-linked (Glc...) serine glycan is linked to serine 99. The Ca(2+) site is built by aspartate 110 and aspartate 111. Residue aspartate 110 is modified to (3R)-3-hydroxyaspartate. Phosphoserine is present on serine 114. The EGF-like 2 domain occupies 130–171 (LDATCNIKNGRCKQFCKNSPDNKVICSCTEGYQLAEDQKSCE). Residues 193 to 236 (AETVFSNMDYENSTEAVFIQDDITDGAILNNVTESSESLNDFTR) constitute a propeptide, activation peptide. The residue at position 202 (tyrosine 202) is a Sulfotyrosine. Asparagine 204 carries N-linked (GlcNAc...) asparagine glycosylation. The residue at position 205 (serine 205) is a Phosphoserine. Threonine 206 carries the phosphothreonine; alternate modification. Threonine 206 carries O-linked (GalNAc...) threonine; alternate glycosylation. N-linked (GlcNAc...) asparagine glycosylation is present at asparagine 223. O-linked (GalNAc...) threonine glycosylation is found at threonine 225 and threonine 235. In terms of domain architecture, Peptidase S1 spans 237-469 (VVGGENAKPG…YVNWIKEKTK (233 aa)). The active-site Charge relay system is histidine 277. Residues glutamate 291, asparagine 293, glutamate 298, and glutamate 301 each coordinate Ca(2+). The active-site Charge relay system is aspartate 325. Serine 421 (charge relay system) is an active-site residue.

Belongs to the peptidase S1 family. Heterodimer of a light chain and a heavy chain; disulfide-linked. Interacts (inactive and activated) with F11 (activated) in calcium-dependent manner. Interacts with SERPINC1. Post-translationally, activated by factor XIa, which excises the activation peptide. The propeptide can also be removed by snake venom protease. Activated by coagulation factor VIIa-tissue factor (F7-F3) complex in calcium-dependent manner. The iron and 2-oxoglutarate dependent 3-hydroxylation of aspartate and asparagine is (R) stereospecific within EGF domains. In terms of processing, predominantly O-glucosylated at Ser-99 by POGLUT1 in vitro. As to expression, detected in liver.

The protein resides in the secreted. It carries out the reaction Selective cleavage of Arg-|-Ile bond in factor X to form factor Xa.. Factor IX is a vitamin K-dependent plasma protein that participates in the intrinsic pathway of blood coagulation by converting factor X to its active form in the presence of Ca(2+) ions, phospholipids, and factor VIIIa. The polypeptide is Coagulation factor IX (F9) (Mus musculus (Mouse)).